A 406-amino-acid chain; its full sequence is High mobility group nucleosome-binding domain-containing protein 5 (406 aa).

The disordered stretch occupies residues 1–406 (MPKRKAAGDV…GEKEEPLSIV (406 aa)). Thr29 is modified (phosphothreonine). Residues 35-44 (KRASTSRKTK) are compositionally biased toward basic residues. Basic and acidic residues-rich tracts occupy residues 63–72 (TKPEDVKDEC), 92–101 (MEAEEVKEQI), 110–126 (GEKK…DELK), 136–159 (EDGK…EGLN), and 166–187 (KSED…KGED). Lys64 participates in a covalent cross-link: Glycyl lysine isopeptide (Lys-Gly) (interchain with G-Cter in SUMO2). Lys98 participates in a covalent cross-link: Glycyl lysine isopeptide (Lys-Gly) (interchain with G-Cter in SUMO1); alternate. A Glycyl lysine isopeptide (Lys-Gly) (interchain with G-Cter in SUMO2); alternate cross-link involves residue Lys98. Lys121 is covalently cross-linked (Glycyl lysine isopeptide (Lys-Gly) (interchain with G-Cter in SUMO2)). Residues 188–200 (GKEEGDEKEEEKD) are compositionally biased toward acidic residues. 4 stretches are compositionally biased toward basic and acidic residues: residues 201 to 239 (DKEG…KEGQ), 246 to 266 (EDLH…KEGQ), 272 to 284 (KEIH…KEGQ), and 290 to 311 (KEYL…KEGQ). The segment covering 312 to 325 (PEEDGKEDQPEEDG) has biased composition (acidic residues). Residues 326–365 (KEGQCKEDGKEGHHEEGGKEDLHEEDGKEKDGGKEDRKEE) are compositionally biased toward basic and acidic residues. Positions 366–376 (GEQEVAVDEGS) are enriched in acidic residues. The span at 377-406 (DENKVEAEEEGAENKDFKQDGEKEEPLSIV) shows a compositional bias: basic and acidic residues.

Belongs to the HMGN family. Expressed in liver, spleen, lung, heart, kidney, muscle and brain (at protein level). Widely expressed with highest levels in submaxillary gland, thymus, kidney and liver and lowest levels in brain, lung, pancreas and eye.

The protein resides in the nucleus. Preferentially binds to euchromatin and modulates cellular transcription by counteracting linker histone-mediated chromatin compaction. The polypeptide is High mobility group nucleosome-binding domain-containing protein 5 (Hmgn5) (Mus musculus (Mouse)).